We begin with the raw amino-acid sequence, 178 residues long: Caveolin-1 (178 aa).

S2 bears the N-acetylserine mark. A Phosphoserine modification is found at S2. The segment at 2 to 94 is required for homooligomerization; the sequence is SGGKYVDSEG…WKASFTTFTV (93 aa). Over 2 to 104 the chain is Cytoplasmic; it reads SGGKYVDSEG…TKYWFYRLLS (103 aa). K5 carries the post-translational modification N6-acetyllysine; alternate. K5 participates in a covalent cross-link: Glycyl lysine isopeptide (Lys-Gly) (interchain with G-Cter in ubiquitin); alternate. Y6 is modified (phosphotyrosine). S9 carries the phosphoserine modification. Position 14 is a phosphotyrosine; by ABL1 (Y14). At Y25 the chain carries Phosphotyrosine. Residues K26 and K30 each participate in a glycyl lysine isopeptide (Lys-Gly) (interchain with G-Cter in ubiquitin) cross-link. S37 bears the Phosphoserine mark. Glycyl lysine isopeptide (Lys-Gly) (interchain with G-Cter in ubiquitin) cross-links involve residues K39, K47, and K57. An interaction with CAVIN3 region spans residues 82 to 94; the sequence is DGIWKASFTTFTV. An intramembrane region (helical) is located at residues 105–125; sequence ALFGIPMALVWGIYFAILSFL. At 126-178 the chain is on the cytoplasmic side; the sequence is HIWAVVPCIKSFLIEIQCISRVYSIYVHTVCDPLFEAVGKIFSNVRINLQKEI. Residues 131 to 142 are interacts with SPRY1, SPRY2, SPRY3 and SPRY4; the sequence is VPCIKSFLIEIQ. Residues C133, C143, and C156 are each lipidated (S-palmitoyl cysteine). The interval 149–160 is interacts with SPRY1, SPRY2, and SPRY4; the sequence is SIYVHTVCDPLF. Positions 167 to 178 are interacts with SPRY1, SPRY2, SPRY3 and SPRY4; sequence FSNVRINLQKEI.

The protein belongs to the caveolin family. Homooligomer. Interacts with GLIPR2. Interacts with NOSTRIN. Interacts with SNAP25 and STX1A. Interacts (via the N-terminus) with DPP4; the interaction is direct. Interacts with CTNNB1, CDH1 and JUP. Interacts with PACSIN2; this interaction induces membrane tubulation. Interacts with SLC7A9. Interacts with BMX and BTK. Interacts with TGFBR1. Interacts with CAVIN3 (via leucine-zipper domain) in a cholesterol-sensitive manner. Interacts with CAVIN1. Interacts with EHD2 in a cholesterol-dependent manner. Forms a ternary complex with UBXN6 and VCP; mediates CAV1 targeting to lysosomes for degradation. Interacts with ABCG1; this interaction regulates ABCG1-mediated cholesterol efflux. Interacts with NEU3; this interaction enhances NEU3 sialidase activity within caveola. Interacts (via C-terminus) with SPRY1, SPRY2 (via C-terminus), SPRY3, and SPRY4. Interacts with IGFBP5; this interaction allows trafficking of IGFBP5 from the plasma membrane to the nucleus. In terms of processing, phosphorylated at Tyr-14 by ABL1 in response to oxidative stress. Post-translationally, ubiquitinated. Undergo monoubiquitination and multi- and/or polyubiquitination. Monoubiquitination of N-terminal lysines promotes integration in a ternary complex with UBXN6 and VCP which promotes oligomeric CAV1 targeting to lysosomes for degradation. Ubiquitinated by ZNRF1; leading to degradation and modulation of the TLR4-mediated immune response.

The protein resides in the golgi apparatus membrane. It is found in the cell membrane. The protein localises to the membrane. Its subcellular location is the caveola. It localises to the membrane raft. In terms of biological role, may act as a scaffolding protein within caveolar membranes. Forms a stable heterooligomeric complex with CAV2 that targets to lipid rafts and drives caveolae formation. Mediates the recruitment of CAVIN proteins (CAVIN1/2/3/4) to the caveolae. Interacts directly with G-protein alpha subunits and can functionally regulate their activity. Involved in the costimulatory signal essential for T-cell receptor (TCR)-mediated T-cell activation. Its binding to DPP4 induces T-cell proliferation and NF-kappa-B activation in a T-cell receptor/CD3-dependent manner. Recruits CTNNB1 to caveolar membranes and may regulate CTNNB1-mediated signaling through the Wnt pathway. Negatively regulates TGFB1-mediated activation of SMAD2/3 by mediating the internalization of TGFBR1 from membrane rafts leading to its subsequent degradation. Binds 20(S)-hydroxycholesterol (20(S)-OHC). In Papio anubis (Olive baboon), this protein is Caveolin-1 (CAV1).